We begin with the raw amino-acid sequence, 122 residues long: Holo-[acyl-carrier-protein] synthase (122 aa).

Mg(2+) is bound by residues Asp-8 and Glu-57.

This sequence belongs to the P-Pant transferase superfamily. AcpS family. Requires Mg(2+) as cofactor.

The protein localises to the cytoplasm. It carries out the reaction apo-[ACP] + CoA = holo-[ACP] + adenosine 3',5'-bisphosphate + H(+). Transfers the 4'-phosphopantetheine moiety from coenzyme A to a Ser of acyl-carrier-protein. The chain is Holo-[acyl-carrier-protein] synthase from Protochlamydia amoebophila (strain UWE25).